The primary structure comprises 175 residues: Adenine phosphoribosyltransferase (175 aa).

The protein belongs to the purine/pyrimidine phosphoribosyltransferase family. Homodimer.

The protein resides in the cytoplasm. It catalyses the reaction AMP + diphosphate = 5-phospho-alpha-D-ribose 1-diphosphate + adenine. Its pathway is purine metabolism; AMP biosynthesis via salvage pathway; AMP from adenine: step 1/1. Functionally, catalyzes a salvage reaction resulting in the formation of AMP, that is energically less costly than de novo synthesis. The polypeptide is Adenine phosphoribosyltransferase (Pelagibacter ubique (strain HTCC1062)).